Here is a 102-residue protein sequence, read N- to C-terminus: Small ribosomal subunit protein uS10 (102 aa).

The protein belongs to the universal ribosomal protein uS10 family. In terms of assembly, part of the 30S ribosomal subunit.

Its function is as follows. Involved in the binding of tRNA to the ribosomes. The chain is Small ribosomal subunit protein uS10 from Bifidobacterium adolescentis (strain ATCC 15703 / DSM 20083 / NCTC 11814 / E194a).